Here is a 204-residue protein sequence, read N- to C-terminus: Phosphoribosyl-dephospho-CoA transferase (204 aa).

Residues Asp129 and Asp131 contribute to the active site.

This sequence belongs to the MdcG family.

The enzyme catalyses apo-[malonate decarboxylase ACP] + 2'-(5''-triphospho-alpha-D-ribosyl)-3'-dephospho-CoA = holo-[malonate decarboxylase ACP] + diphosphate. Functionally, transfers 2'-(5-triphosphoribosyl)-3'-dephosphocoenzyme-A to the apo-[acyl-carrier-protein] of the malonate decarboxylase to yield holo-[acyl-carrier-protein]. In Pseudomonas putida (strain W619), this protein is Phosphoribosyl-dephospho-CoA transferase.